Consider the following 155-residue polypeptide: Small ribosomal subunit protein uS9 (155 aa).

The protein belongs to the universal ribosomal protein uS9 family.

The sequence is that of Small ribosomal subunit protein uS9 from Rhizobium etli (strain ATCC 51251 / DSM 11541 / JCM 21823 / NBRC 15573 / CFN 42).